A 152-amino-acid chain; its full sequence is MKKIQNVFAAIKTGLLAKATCVTVNGSKRVFEVLSAFENEGLIRGFQIIDIKTNKVSIYLKYKQDMTSLLSRIKAVSVNKEKLYLKGKVLTKFYPRVNLYFIESKFGLKTLPQLQLRNKMLKTPIGGEIKYIIEINKVNPKLQELMKKKNEI.

The protein belongs to the universal ribosomal protein uS8 family.

The protein localises to the mitochondrion. This chain is Small ribosomal subunit protein uS8m (mrps8), found in Dictyostelium citrinum (Slime mold).